Consider the following 529-residue polypeptide: Peptide chain release factor 3 (529 aa).

One can recognise a tr-type G domain in the interval 11–280 (AKRRTFAIIS…GLVAWAPAPM (270 aa)). GTP contacts are provided by residues 20–27 (SHPDAGKT), 88–92 (DTPGH), and 142–145 (NKLD).

It belongs to the TRAFAC class translation factor GTPase superfamily. Classic translation factor GTPase family. PrfC subfamily.

Its subcellular location is the cytoplasm. Its function is as follows. Increases the formation of ribosomal termination complexes and stimulates activities of RF-1 and RF-2. It binds guanine nucleotides and has strong preference for UGA stop codons. It may interact directly with the ribosome. The stimulation of RF-1 and RF-2 is significantly reduced by GTP and GDP, but not by GMP. The protein is Peptide chain release factor 3 of Edwardsiella ictaluri (strain 93-146).